We begin with the raw amino-acid sequence, 449 residues long: Tubulin alpha-8 chain (449 aa).

An MREC motif motif is present at residues 1 to 4 (MREC). Positions 11, 71, 140, 144, 145, 179, 206, and 228 each coordinate GTP. Mg(2+) is bound at residue Glu-71. Residue Glu-254 is part of the active site.

Belongs to the tubulin family. As to quaternary structure, dimer of alpha and beta chains. A typical microtubule is a hollow water-filled tube with an outer diameter of 25 nm and an inner diameter of 15 nM. Alpha-beta heterodimers associate head-to-tail to form protofilaments running lengthwise along the microtubule wall with the beta-tubulin subunit facing the microtubule plus end conferring a structural polarity. Microtubules usually have 13 protofilaments but different protofilament numbers can be found in some organisms and specialized cells. Mg(2+) is required as a cofactor. In terms of processing, some glutamate residues at the C-terminus are polyglycylated, resulting in polyglycine chains on the gamma-carboxyl group. Glycylation is mainly limited to tubulin incorporated into axonemes (cilia and flagella) whereas glutamylation is prevalent in neuronal cells, centrioles, axonemes, and the mitotic spindle. Both modifications can coexist on the same protein on adjacent residues, and lowering polyglycylation levels increases polyglutamylation, and reciprocally. Cilia and flagella glycylation is required for their stability and maintenance. Flagella glycylation controls sperm motility. Post-translationally, some glutamate residues at the C-terminus are polyglutamylated, resulting in polyglutamate chains on the gamma-carboxyl group. Polyglutamylation plays a key role in microtubule severing by spastin (SPAST). SPAST preferentially recognizes and acts on microtubules decorated with short polyglutamate tails: severing activity by SPAST increases as the number of glutamates per tubulin rises from one to eight, but decreases beyond this glutamylation threshold. Glutamylation is also involved in cilia motility. The C-terminal phenylalanine residue is cleaved by MATCAP1/KIAA0895L.

It is found in the cytoplasm. The protein resides in the cytoskeleton. The catalysed reaction is GTP + H2O = GDP + phosphate + H(+). Its function is as follows. Tubulin is the major constituent of microtubules, a cylinder consisting of laterally associated linear protofilaments composed of alpha- and beta-tubulin heterodimers. Microtubules grow by the addition of GTP-tubulin dimers to the microtubule end, where a stabilizing cap forms. Below the cap, tubulin dimers are in GDP-bound state, owing to GTPase activity of alpha-tubulin. In Bos taurus (Bovine), this protein is Tubulin alpha-8 chain (TUBA8).